A 156-amino-acid chain; its full sequence is Small ribosomal subunit protein uS7c (156 aa).

This sequence belongs to the universal ribosomal protein uS7 family. As to quaternary structure, part of the 30S ribosomal subunit.

Its subcellular location is the plastid. It localises to the chloroplast. Functionally, one of the primary rRNA binding proteins, it binds directly to 16S rRNA where it nucleates assembly of the head domain of the 30S subunit. This is Small ribosomal subunit protein uS7c (rps7) from Guillardia theta (Cryptophyte).